A 213-amino-acid polypeptide reads, in one-letter code: Phosphatidylserine decarboxylase proenzyme (213 aa).

Ser182 acts as the Schiff-base intermediate with substrate; via pyruvic acid in catalysis. The residue at position 182 (Ser182) is a Pyruvic acid (Ser); by autocatalysis.

It belongs to the phosphatidylserine decarboxylase family. PSD-A subfamily. In terms of assembly, heterodimer of a large membrane-associated beta subunit and a small pyruvoyl-containing alpha subunit. It depends on pyruvate as a cofactor. Is synthesized initially as an inactive proenzyme. Formation of the active enzyme involves a self-maturation process in which the active site pyruvoyl group is generated from an internal serine residue via an autocatalytic post-translational modification. Two non-identical subunits are generated from the proenzyme in this reaction, and the pyruvate is formed at the N-terminus of the alpha chain, which is derived from the carboxyl end of the proenzyme. The post-translation cleavage follows an unusual pathway, termed non-hydrolytic serinolysis, in which the side chain hydroxyl group of the serine supplies its oxygen atom to form the C-terminus of the beta chain, while the remainder of the serine residue undergoes an oxidative deamination to produce ammonia and the pyruvoyl prosthetic group on the alpha chain.

The protein localises to the cell membrane. The catalysed reaction is a 1,2-diacyl-sn-glycero-3-phospho-L-serine + H(+) = a 1,2-diacyl-sn-glycero-3-phosphoethanolamine + CO2. It participates in phospholipid metabolism; phosphatidylethanolamine biosynthesis; phosphatidylethanolamine from CDP-diacylglycerol: step 2/2. Functionally, catalyzes the formation of phosphatidylethanolamine (PtdEtn) from phosphatidylserine (PtdSer). The sequence is that of Phosphatidylserine decarboxylase proenzyme from Geotalea uraniireducens (strain Rf4) (Geobacter uraniireducens).